The following is a 335-amino-acid chain: GTPase Obg (335 aa).

The Obg domain maps to 1 to 158 (MFVDQITLEL…RLVELELKLI (158 aa)). The 176-residue stretch at 159–334 (ADIGLVGFPN…LYDLFKSKLS (176 aa)) folds into the OBG-type G domain. GTP is bound by residues 165–172 (GFPNAGKS), 190–194 (FTTLH), 215–218 (DIPG), 285–288 (NKID), and 315–317 (SGL). Residues serine 172 and threonine 192 each coordinate Mg(2+).

This sequence belongs to the TRAFAC class OBG-HflX-like GTPase superfamily. OBG GTPase family. Monomer. Requires Mg(2+) as cofactor.

The protein resides in the cytoplasm. Functionally, an essential GTPase which binds GTP, GDP and possibly (p)ppGpp with moderate affinity, with high nucleotide exchange rates and a fairly low GTP hydrolysis rate. Plays a role in control of the cell cycle, stress response, ribosome biogenesis and in those bacteria that undergo differentiation, in morphogenesis control. This is GTPase Obg from Chlamydia trachomatis serovar A (strain ATCC VR-571B / DSM 19440 / HAR-13).